The chain runs to 503 residues: Glycerol kinase (503 aa).

Residue Thr14 coordinates ADP. Residues Thr14, Thr15, and Ser16 each coordinate ATP. Sn-glycerol 3-phosphate is bound at residue Thr14. ADP is bound at residue Arg18. Sn-glycerol 3-phosphate contacts are provided by Arg84, Glu85, Tyr136, and Asp246. The glycerol site is built by Arg84, Glu85, Tyr136, Asp246, and Gln247. ADP contacts are provided by Thr268 and Gly311. ATP-binding residues include Thr268, Gly311, Gln315, and Gly412. The ADP site is built by Gly412 and Asn416.

This sequence belongs to the FGGY kinase family.

It carries out the reaction glycerol + ATP = sn-glycerol 3-phosphate + ADP + H(+). Its pathway is polyol metabolism; glycerol degradation via glycerol kinase pathway; sn-glycerol 3-phosphate from glycerol: step 1/1. Its activity is regulated as follows. Inhibited by fructose 1,6-bisphosphate (FBP). Key enzyme in the regulation of glycerol uptake and metabolism. Catalyzes the phosphorylation of glycerol to yield sn-glycerol 3-phosphate. The protein is Glycerol kinase of Haemophilus influenzae (strain PittGG).